The primary structure comprises 234 residues: Glucosamine-6-phosphate deaminase (234 aa).

Residue Asp63 is the Proton acceptor; for enolization step of the active site. Catalysis depends on Asn129, which acts as the For ring-opening step. His131 acts as the Proton acceptor; for ring-opening step in catalysis. The For ring-opening step role is filled by Glu136.

This sequence belongs to the glucosamine/galactosamine-6-phosphate isomerase family. NagB subfamily.

The enzyme catalyses alpha-D-glucosamine 6-phosphate + H2O = beta-D-fructose 6-phosphate + NH4(+). It participates in amino-sugar metabolism; N-acetylneuraminate degradation; D-fructose 6-phosphate from N-acetylneuraminate: step 5/5. In terms of biological role, catalyzes the reversible isomerization-deamination of glucosamine 6-phosphate (GlcN6P) to form fructose 6-phosphate (Fru6P) and ammonium ion. The sequence is that of Glucosamine-6-phosphate deaminase from Listeria welshimeri serovar 6b (strain ATCC 35897 / DSM 20650 / CCUG 15529 / CIP 8149 / NCTC 11857 / SLCC 5334 / V8).